Consider the following 362-residue polypeptide: MSQAALRIVEGSSMDKSKALSAALSQIERQFGKGSVMKLGKNDKSMDVEVISSGSLGLDIALGVGGLPKGRIVEVYGPESSGKTTLALHAVAEAQKKGGICAFIDAEHALDPVYARKLGVNVDDLLISQPDHGEQALEIADTLVRSGAVDVLIIDSVAALVPRAELEGEMGDALPGLQARLMSQALRKLTASINKSNTMVIFINQIRMKIGVMYGSPETTTGGNALKFYASVRLDIRRIGAIKERDEVVGNQTRVKVVKNKLAPPFKQVEFDIMYGEGISKMGEILDLGVKAGIVEKSGAWFSYDSQRMGQGRENAKAFLRANPDITAKVEMAIRQNSGLIAEQILAGSPERETDDDETAED.

77–84 lines the ATP pocket; that stretch reads GPESSGKT.

The protein belongs to the RecA family.

It localises to the cytoplasm. Can catalyze the hydrolysis of ATP in the presence of single-stranded DNA, the ATP-dependent uptake of single-stranded DNA by duplex DNA, and the ATP-dependent hybridization of homologous single-stranded DNAs. It interacts with LexA causing its activation and leading to its autocatalytic cleavage. The polypeptide is Protein RecA (Nitrobacter winogradskyi (strain ATCC 25391 / DSM 10237 / CIP 104748 / NCIMB 11846 / Nb-255)).